The primary structure comprises 397 residues: Formate-dependent phosphoribosylglycinamide formyltransferase (397 aa).

N(1)-(5-phospho-beta-D-ribosyl)glycinamide-binding positions include 21 to 22 and Glu-81; that span reads EL. ATP-binding positions include Arg-113, Lys-154, 194–197, and Glu-202; that span reads EEFV. The ATP-grasp domain maps to 118–312; it reads RFAAEKLKLP…EFQIHVRSAI (195 aa). Residues Glu-271 and Glu-283 each contribute to the Mg(2+) site. Residues Asp-290, Lys-361, and 368–369 contribute to the N(1)-(5-phospho-beta-D-ribosyl)glycinamide site; that span reads RR.

Belongs to the PurK/PurT family. Homodimer.

It carries out the reaction N(1)-(5-phospho-beta-D-ribosyl)glycinamide + formate + ATP = N(2)-formyl-N(1)-(5-phospho-beta-D-ribosyl)glycinamide + ADP + phosphate + H(+). It participates in purine metabolism; IMP biosynthesis via de novo pathway; N(2)-formyl-N(1)-(5-phospho-D-ribosyl)glycinamide from N(1)-(5-phospho-D-ribosyl)glycinamide (formate route): step 1/1. Its function is as follows. Involved in the de novo purine biosynthesis. Catalyzes the transfer of formate to 5-phospho-ribosyl-glycinamide (GAR), producing 5-phospho-ribosyl-N-formylglycinamide (FGAR). Formate is provided by PurU via hydrolysis of 10-formyl-tetrahydrofolate. The sequence is that of Formate-dependent phosphoribosylglycinamide formyltransferase from Saccharolobus solfataricus (strain ATCC 35092 / DSM 1617 / JCM 11322 / P2) (Sulfolobus solfataricus).